The chain runs to 412 residues: MKAEIMAIGTEILLGDIVNTNAQFLAKELANLGIGVYHQSVVGDNSERILEAFDNAFKNCDTIITTGGLGPTKDDLSKELAAKYFNMEMCLREELLCDLEDYFKKNNLEMTENNKKQCYFPKEAIILPNPNGTAPGAILEGENNKRIILLPGPPREMEPMFTNHVVPYLSKFTDSVLVSKILRVFGIGESKMEDLVCDLLDNENPTVAPYAKNIDVILRITAKGKNKEEAEKLISPMEKEIRKRLGDNIYGEGEVTLEEVVGKLLVDKKMTVSTAESCTGGMVASTLINYPGISEVFMEGAVTYSNEAKMKRLGVKKETLEDFGAVSEECAREMAKGIAKNAGTRIGISTTGIAGPGGGTEEKPVGLVYAGLCIDGITKVKKFNFKADRQKVRTRTMMNVLDWLRRELEKID.

The protein belongs to the CinA family.

The protein is Putative competence-damage inducible protein of Clostridium perfringens (strain ATCC 13124 / DSM 756 / JCM 1290 / NCIMB 6125 / NCTC 8237 / Type A).